The primary structure comprises 227 residues: Cytochrome c oxidase subunit 2 (227 aa).

Over 1–26 the chain is Mitochondrial intermembrane; the sequence is MATWSNLSIQDGASPLMEQLSFFHDD. The chain crosses the membrane as a helical span at residues 27–48; it reads HTMVVLLITVIVGYALSYMLFN. Topologically, residues 49-62 are mitochondrial matrix; it reads AYTNRNMLHGHLIE. Residues 63–82 form a helical membrane-spanning segment; that stretch reads TIWTALPAITLIFIALPSLR. Residues 83–227 lie on the Mitochondrial intermembrane side of the membrane; sequence LLYLLDDSVD…LFIKWLSKMI (145 aa). Positions 161, 196, 198, 200, 204, and 207 each coordinate Cu cation. Glutamate 198 is a binding site for Mg(2+).

It belongs to the cytochrome c oxidase subunit 2 family. As to quaternary structure, component of the cytochrome c oxidase (complex IV, CIV), a multisubunit enzyme composed of a catalytic core of 3 subunits and several supernumerary subunits. The complex exists as a monomer or a dimer and forms supercomplexes (SCs) in the inner mitochondrial membrane with ubiquinol-cytochrome c oxidoreductase (cytochrome b-c1 complex, complex III, CIII). Cu cation is required as a cofactor.

Its subcellular location is the mitochondrion inner membrane. It carries out the reaction 4 Fe(II)-[cytochrome c] + O2 + 8 H(+)(in) = 4 Fe(III)-[cytochrome c] + 2 H2O + 4 H(+)(out). Functionally, component of the cytochrome c oxidase, the last enzyme in the mitochondrial electron transport chain which drives oxidative phosphorylation. The respiratory chain contains 3 multisubunit complexes succinate dehydrogenase (complex II, CII), ubiquinol-cytochrome c oxidoreductase (cytochrome b-c1 complex, complex III, CIII) and cytochrome c oxidase (complex IV, CIV), that cooperate to transfer electrons derived from NADH and succinate to molecular oxygen, creating an electrochemical gradient over the inner membrane that drives transmembrane transport and the ATP synthase. Cytochrome c oxidase is the component of the respiratory chain that catalyzes the reduction of oxygen to water. Electrons originating from reduced cytochrome c in the intermembrane space (IMS) are transferred via the dinuclear copper A center (CU(A)) of subunit 2 and heme A of subunit 1 to the active site in subunit 1, a binuclear center (BNC) formed by heme A3 and copper B (CU(B)). The BNC reduces molecular oxygen to 2 water molecules using 4 electrons from cytochrome c in the IMS and 4 protons from the mitochondrial matrix. This is Cytochrome c oxidase subunit 2 (COII) from Schistocerca gregaria (Desert locust).